The chain runs to 726 residues: MKVLTDLQKRIFAIVKKENGKPIPPGIVVRMMENQAGFPGKQQVYRAIDDLLEWHIFRKSGGATNQLLINYELADPVLDQKFQGILNLGNKNTGFVRPLDDDKTVYYIHFSNLAGALDGDLVEFCPLDKPQVGDKFDAAVLKIVKRSRVLYAGNFLIEYSDFGQEFRIVADNPRFYLTPIVNKASVPAELESNTKVAFQIDEYDPANNLCKVSIQQILGNNDEPLINLKAIMLDHSIVFEDNDVVEQQAAKLQFDEKEQSKPYRKDLTELAFVTIDPATSKDLDDAIYVKRTDKGFVLYVAIADVAYYVQRNSELDIEARHKTSSIYLPGYYVVPMLPERLSNELCSLNPNEKRYVVVCELNFDHEARLNFSEVYPATIVSQRRFAYSEVNDWLEDSDALKDESATVLESLKAGFTLSELIAEQRKKKGTIDLSHSETEVVVDQNYYPIEIRFLTHGKAETMIENLMVVANEAVAWTLTNHKVHLPYRVHPRPSKKKLQMLLENIVELKITQPNFVLDTVTSTQIAAWLKENKDNPSYDIFVILLLRTLGKAFYIVNPLIHFSIGSHHYTHFTSPIRRYADLTVHRLLWMNLFTPERFTDTEREQLNAELEQICETINDTEIKINGCERTANDYLTTLYLSKQVGQTFHGFISAITSFGIFMRMDENNFDGLIKITSIPEDFFVFEKDRMVLRGKRTNKVFRIGDRLTAKLTEIDTVQKRAILTLV.

Residues 264–592 (RKDLTELAFV…TVHRLLWMNL (329 aa)) form the RNB domain. The 82-residue stretch at 645–726 (GQTFHGFISA…VQKRAILTLV (82 aa)) folds into the S1 motif domain.

It belongs to the RNR ribonuclease family. RNase R subfamily.

Its subcellular location is the cytoplasm. The enzyme catalyses Exonucleolytic cleavage in the 3'- to 5'-direction to yield nucleoside 5'-phosphates.. 3'-5' exoribonuclease that releases 5'-nucleoside monophosphates and is involved in maturation of structured RNAs. This is Ribonuclease R from Mycoplasma pneumoniae (strain ATCC 29342 / M129 / Subtype 1) (Mycoplasmoides pneumoniae).